The primary structure comprises 389 residues: Probable transcription factor FL (389 aa).

Disordered stretches follow at residues 1-41 (MDPN…ANVP) and 140-226 (EHDM…HPFV). Positions 19-39 (PPAPAPVPPPPPPPPPPPPAN) are enriched in pro residues. Over residues 159 to 180 (VTGKKQAKKGSAARKGKKARRK) the composition is skewed to basic residues. Residues 161-168 (GKKQAKKG) carry the Nuclear localization signal motif. Residues 190 to 201 (QEDEMDCCDEDG) show a composition bias toward acidic residues. 3 DNA-binding regions span residues 221–225 (REHPF), 290–297 (NKPKMRHY), and 361–364 (YVPT).

It belongs to the FLO/LFY family. In terms of assembly, interacts with APO1. In terms of tissue distribution, in very young panicle but not in mature florets, mature leaves, roots or apical meristems.

It is found in the nucleus. Probable transcription factor. Together with APO1, involved in the temporal regulation of meristem size and identity during both vegetative and reproductive developments through interaction with APO1. Promotes flowering. This is Probable transcription factor FL from Oryza sativa subsp. japonica (Rice).